The chain runs to 349 residues: Protein RecA (349 aa).

71 to 75 is a binding site for phosphate; that stretch reads SSGKT. ATP contacts are provided by residues 71-76 and 102-105; these read SSGKTT and DPEY. Glutamine 196 is a binding site for phosphate.

This sequence belongs to the RecA family. As to quaternary structure, polymerizes non-specifically on ssDNA to form filaments. Interacts with and activates LexA leading to autocatalytic cleavage of LexA, which derepresses the SOS regulon and activates DNA repair.

The protein resides in the cytoplasm. In terms of biological role, required for homologous recombination (HR) and the bypass of mutagenic DNA lesions (double strand breaks, DSB) by the SOS response. Can catalyze the hydrolysis of ATP in the presence of single-stranded DNA, the ATP-dependent uptake of single-stranded DNA by duplex DNA, and the ATP-dependent hybridization of homologous single-stranded DNAs. Numerous X-ray crystals have been resolved under different conditions which indicate the flexibility of the protein, essential to its function. Gln-196 contributes to this plasticity by acting as a switch residue, which transmits the effect of nucleotide binding to the DNA-binding region. The polypeptide is Protein RecA (Mycolicibacterium smegmatis (strain ATCC 700084 / mc(2)155) (Mycobacterium smegmatis)).